Consider the following 205-residue polypeptide: Enhancer of split mgamma protein (205 aa).

A bHLH domain is found at 15 to 72 (YRKVMKPMLERKRRARINKCLDELKDLMVATLESEGEHVTRLEKADILELTVTHLQKM). One can recognise an Orange domain in the interval 93–126 (FRSGYIHAVNEVSRSLSQLPGMNVSLGTQLMTHL). A WRPW motif motif is present at residues 202–205 (WRPW).

Homodimer. Heterodimer with dpn. Might form higher-order oligomers. Transcription repression requires formation of a complex with a corepressor protein (Groucho). In terms of tissue distribution, expressed in sensory organ precursors in the wing, leg and eye imaginal disk.

It localises to the nucleus. In terms of biological role, transcriptional repressor of genes that require a bHLH protein for their transcription. May serve as a transcriptional regulator of the Achaete-scute complex (AS-C) genes. Contributes to the neural-epidermal lineage decision during early neurogenesis. Part of the Notch signaling pathway, plays a role in neuroblasts proliferation in embryos and larvae. In the larval brain, together with other self-renewal transcriptional repressors such as klu and dpn, required for type II neuroblast self-renewal and for maintaining erm in an inactive state in intermediate neural progenitors (INP) derived from type II neuroblasts. In Drosophila melanogaster (Fruit fly), this protein is Enhancer of split mgamma protein.